Here is a 194-residue protein sequence, read N- to C-terminus: Probable nicotinate-nucleotide adenylyltransferase (194 aa).

The protein belongs to the NadD family.

It catalyses the reaction nicotinate beta-D-ribonucleotide + ATP + H(+) = deamido-NAD(+) + diphosphate. It functions in the pathway cofactor biosynthesis; NAD(+) biosynthesis; deamido-NAD(+) from nicotinate D-ribonucleotide: step 1/1. Functionally, catalyzes the reversible adenylation of nicotinate mononucleotide (NaMN) to nicotinic acid adenine dinucleotide (NaAD). This chain is Probable nicotinate-nucleotide adenylyltransferase, found in Chlorobium luteolum (strain DSM 273 / BCRC 81028 / 2530) (Pelodictyon luteolum).